The chain runs to 742 residues: Synaptic vesicle glycoprotein 2A (742 aa).

Residues 1–57 (MEEGFRDRAAFIRGAKDIAKEVKKHAAKKVVKGLDRVQDEYSRRSYSRFEEEDDDDD) are interaction with SYT1. Topologically, residues 1–169 (MEEGFRDRAA…GHGRFQWTLY (169 aa)) are cytoplasmic. Basic and acidic residues predominate over residues 33-49 (GLDRVQDEYSRRSYSRF). Residues 33 to 144 (GLDRVQDEYS…GRGEAQRRKE (112 aa)) form a disordered region. A phosphoserine mark is found at serine 80 and serine 81. A Phosphothreonine modification is found at threonine 84. Residues 122-137 (VRGGLSDGEGPPGGRG) are compositionally biased toward gly residues. Serine 127 bears the Phosphoserine mark. Residues 170–190 (FVLGLALMADGVEVFVVGFVL) form a helical membrane-spanning segment. At 191-205 (PSAEKDMCLSDSNKG) the chain is on the extracellular side. A helical transmembrane segment spans residues 206 to 226 (MLGLIVYLGMMVGAFLWGGLA). The Cytoplasmic portion of the chain corresponds to 227 to 233 (DRLGRRQ). A helical transmembrane segment spans residues 234 to 254 (CLLISLSVNSVFAFFSSFVQG). Residues 255–262 (YGTFLFCR) are Extracellular-facing. Residues 263–283 (LLSGVGIGGSIPIVFSYFSEF) traverse the membrane as a helical segment. The Cytoplasmic segment spans residues 284-294 (LAQEKRGEHLS). A helical membrane pass occupies residues 295–315 (WLCMFWMIGGVYAAAMAWAII). Residues 316–334 (PHYGWSFQMGSAYQFHSWR) lie on the Extracellular side of the membrane. The chain crosses the membrane as a helical span at residues 335-355 (VFVLVCAFPSVFAIGALTTQP). Residues 356 to 447 (ESPRFFLENG…CFGPEYRRIT (92 aa)) lie on the Cytoplasmic side of the membrane. Serine 393 bears the Phosphoserine mark. Residues 448 to 468 (LMMMGVWFTMSFSYYGLTVWF) form a helical membrane-spanning segment. Over 469 to 598 (PDMIRHLQAV…GTGEGAYMVY (130 aa)) the chain is Extracellular. Phosphotyrosine is present on tyrosine 480. Residues asparagine 498, asparagine 548, and asparagine 573 are each glycosylated (N-linked (GlcNAc...) asparagine). A helical transmembrane segment spans residues 599 to 619 (FVSFLGTLAVLPGNIVSALLM). Topologically, residues 620 to 626 (DKIGRLR) are cytoplasmic. A helical membrane pass occupies residues 627–647 (MLAGSSVMSCVSCFFLSFGNS). At 648–651 (ESAM) the chain is on the extracellular side. A helical transmembrane segment spans residues 652-672 (IALLCLFGGVSIASWNALDVL). At 673–690 (TVGLYPSDKRTTAFGFLN) the chain is on the cytoplasmic side. Residues 691 to 711 (ALCKLAAVLGISIFTSFVGIT) form a helical membrane-spanning segment. Lysine 712 is a topological domain (extracellular). A helical membrane pass occupies residues 713–733 (AAPIPFASAALALGSSLALKL). At 734 to 742 (PETRGQVLQ) the chain is on the cytoplasmic side.

Belongs to the major facilitator superfamily. In terms of assembly, interacts with SYT1/synaptotagmin-1 in a calcium-dependent manner. Binds the adapter protein complex AP-2. Phosphorylation by CK1 of the N-terminal cytoplasmic domain regulates interaction with SYT1. In terms of processing, N-glycosylated.

The protein resides in the presynapse. It is found in the cytoplasmic vesicle. The protein localises to the secretory vesicle. It localises to the synaptic vesicle membrane. Plays a role in the control of regulated secretion in neural and endocrine cells, enhancing selectively low-frequency neurotransmission. Positively regulates vesicle fusion by maintaining the readily releasable pool of secretory vesicles. In Macaca fascicularis (Crab-eating macaque), this protein is Synaptic vesicle glycoprotein 2A (SV2A).